Reading from the N-terminus, the 450-residue chain is 23S rRNA (uracil(1939)-C(5))-methyltransferase RlmD (450 aa).

One can recognise a TRAM domain in the interval 12-70 (SKQLSAKLSLNVDQLDHLGAGIAQYQGKVVFIPGALPDETVTVQLTEQKKNYARAKLIK). 4 residues coordinate [4Fe-4S] cluster: C83, C89, C92, and C171. Residues Q283, F312, N317, E333, D360, and D380 each coordinate S-adenosyl-L-methionine. C406 serves as the catalytic Nucleophile.

The protein belongs to the class I-like SAM-binding methyltransferase superfamily. RNA M5U methyltransferase family. RlmD subfamily.

The catalysed reaction is uridine(1939) in 23S rRNA + S-adenosyl-L-methionine = 5-methyluridine(1939) in 23S rRNA + S-adenosyl-L-homocysteine + H(+). Functionally, catalyzes the formation of 5-methyl-uridine at position 1939 (m5U1939) in 23S rRNA. The polypeptide is 23S rRNA (uracil(1939)-C(5))-methyltransferase RlmD (Shewanella putrefaciens (strain CN-32 / ATCC BAA-453)).